Here is a 239-residue protein sequence, read N- to C-terminus: Protein GrpE (239 aa).

Disordered stretches follow at residues 1-56 (MIEN…KNTI) and 208-239 (SMGP…SEDV). Positions 40-53 (TSQKKEAINTEELK) are enriched in basic and acidic residues. Residues 224–239 (TVEEDVNSEVNTSEDV) show a composition bias toward acidic residues.

The protein belongs to the GrpE family. As to quaternary structure, homodimer.

It localises to the cytoplasm. Participates actively in the response to hyperosmotic and heat shock by preventing the aggregation of stress-denatured proteins, in association with DnaK and GrpE. It is the nucleotide exchange factor for DnaK and may function as a thermosensor. Unfolded proteins bind initially to DnaJ; upon interaction with the DnaJ-bound protein, DnaK hydrolyzes its bound ATP, resulting in the formation of a stable complex. GrpE releases ADP from DnaK; ATP binding to DnaK triggers the release of the substrate protein, thus completing the reaction cycle. Several rounds of ATP-dependent interactions between DnaJ, DnaK and GrpE are required for fully efficient folding. This chain is Protein GrpE, found in Prochlorococcus marinus (strain MIT 9215).